We begin with the raw amino-acid sequence, 1235 residues long: ATP-dependent helicase/nuclease subunit A (1235 aa).

The UvrD-like helicase ATP-binding domain occupies 12 to 482; the sequence is SLWTDDQWKA…IDLSQNFRSR (471 aa). Residue 33–40 participates in ATP binding; it reads AAAGSGKT. In terms of domain architecture, UvrD-like helicase C-terminal spans 509–800; it reads AAELTLGAKS…RMMTIHASKG (292 aa).

The protein belongs to the helicase family. AddA subfamily. Heterodimer of AddA and AddB/RexB. The cofactor is Mg(2+).

The catalysed reaction is Couples ATP hydrolysis with the unwinding of duplex DNA by translocating in the 3'-5' direction.. It catalyses the reaction ATP + H2O = ADP + phosphate + H(+). Functionally, the heterodimer acts as both an ATP-dependent DNA helicase and an ATP-dependent, dual-direction single-stranded exonuclease. Recognizes the chi site generating a DNA molecule suitable for the initiation of homologous recombination. The AddA nuclease domain is required for chi fragment generation; this subunit has the helicase and 3' -&gt; 5' nuclease activities. This chain is ATP-dependent helicase/nuclease subunit A, found in Listeria monocytogenes serotype 4a (strain HCC23).